Reading from the N-terminus, the 353-residue chain is ATP-dependent (S)-NAD(P)H-hydrate dehydratase (353 aa).

The YjeF C-terminal domain occupies 18 to 345 (MLARVRQMVP…DEVHTAFLNL (328 aa)). The tract at residues 95–121 (RSSPPALSSSDSGSSPSRTKSAPDTDP) is disordered. The span at 96–114 (SSPPALSSSDSGSSPSRTK) shows a compositional bias: low complexity. Residues Gly-143 and 196 to 202 (NVVEFGR) contribute to the (6S)-NADPHX site. ATP is bound by residues 241-245 (KGAKD) and 260-269 (GGLKRSGGQG). Asp-270 lines the (6S)-NADPHX pocket.

The protein belongs to the NnrD/CARKD family. Mg(2+) serves as cofactor.

It is found in the cytoplasm. The catalysed reaction is (6S)-NADHX + ATP = ADP + phosphate + NADH + H(+). The enzyme catalyses (6S)-NADPHX + ATP = ADP + phosphate + NADPH + H(+). Its function is as follows. Catalyzes the dehydration of the S-form of NAD(P)HX at the expense of ATP, which is converted to ADP. Together with NAD(P)HX epimerase, which catalyzes the epimerization of the S- and R-forms, the enzyme allows the repair of both epimers of NAD(P)HX, a damaged form of NAD(P)H that is a result of enzymatic or heat-dependent hydration. The polypeptide is ATP-dependent (S)-NAD(P)H-hydrate dehydratase (Neurospora crassa (strain ATCC 24698 / 74-OR23-1A / CBS 708.71 / DSM 1257 / FGSC 987)).